Reading from the N-terminus, the 598-residue chain is Vanadium-dependent bromoperoxidase (598 aa).

Phe-361, Gln-363, Asp-365, Asp-368, and Gln-370 together coordinate Ca(2+). Positions 400 and 408 each coordinate vanadate. Residue His-480 is part of the active site. Vanadate-binding residues include Ser-485, Gly-486, His-487, Arg-547, and His-553. The active site involves His-487.

It belongs to the vanadium-dependent haloperoxidase family. Homododecamer. It depends on Ca(2+) as a cofactor. Vanadate is required as a cofactor.

It carries out the reaction RH + Br(-) + H2O2 = RBr + 2 H2O.. Its function is as follows. Catalyzes the halogenation of organic substrates in the presence of hydrogen peroxide. The sequence is that of Vanadium-dependent bromoperoxidase from Corallina pilulifera (Red coralline alga).